The primary structure comprises 544 residues: U1 small nuclear ribonucleoprotein component PRP42 (544 aa).

5 HAT repeats span residues 7–39 (LIHD…YIVK), 51–83 (QLLK…LEYK), 85–118 (GNVS…FCNN), 121–156 (SHQK…QISS), and 163–195 (KYWN…DIMD). A Nuclear localization signal motif is present at residues 230–235 (KKKLKK). 4 HAT repeats span residues 255–288 (FESK…YTIT), 290–322 (QTDS…WLIN), 366–397 (NLLE…FKTF), and 456–488 (VEKN…LIYF).

Component of the 18S U1 snRNP particle, a subcomplex of the spliceosome.

The protein localises to the nucleus. Its function is as follows. Essential component of the U1 snRNP particle, which recognizes and binds the 5'-splice site of pre-mRNA. Together with other non-snRNP factors, U1 snRNP forms the spliceosomal commitment complex, that targets pre-mRNA to the splicing pathway. U1 snRNP is cotranscriptionally recruited to intron-containing genes. Required for U1 snRNP biogenesis. This chain is U1 small nuclear ribonucleoprotein component PRP42 (PRP42), found in Saccharomyces cerevisiae (strain ATCC 204508 / S288c) (Baker's yeast).